The primary structure comprises 667 residues: MDSRNMLVVYSVNLEKKLNAAAHHTIEYQTQKLVLRRGQIFSLKVMLNRPLQSHDELKLIFNTGHNMPFYTVELDPMTSYRSKGWQVKIAKQSGVEVVLNVISAADAVVGRYTMNVNEFDAGVFFLLFNPWCSDDSVFMASEEDRAEYVLNDTGYMYMGFAKQIKEKPWTFGQFEKYILNCCFRLLTHLEPKEMQSPVLVSRAICTMMCAANNFGVLVGNWTGDYSNGTAPYVWASSVPILQQHYITRMPVRFGQCWVFSGVLTTALRAVGIPARSVTNFESAHDTEKNLRVDIYLDESGKTIPHLTKDSVWNFHMWTDAWMKRQDLPQGHDGWQVLDSTPQEISEGQFRIGPSPVSAIRQGLVQIMYDTTFVFTEVNGDKYIWLVKQNQEREKNVLIAVETASIGKNISTKMVGENRRQDITLHYKFPEGSPEERKAMEKASGKRPDDKLNSRTLHISVLQNSVELGHPINLTIVLKRKTATPQNVNISCSLDLQTYTGNKKTNLGVIQKTVQIQGQESEVSLSMDSSFYIYKLGMVDDEMVIKGFIIAEIVDSGERVATDTTLCFLYSAFSVEMPSTSKVNQPLTITCNFKNTLPIPLTNIKFSVESLGLNNMKSWEQETVPPGKTINFQIECTPVKTGPRKFIVKFISRQVKEVHAEKVVLITK.

Residues Asn151, Asn220, and Asn227 are each glycosylated (N-linked (GlcNAc...) asparagine). Active-site residues include Cys256, His315, and Asp338. Ca(2+) contacts are provided by Asn378 and Asp380. Residue Asn408 is glycosylated (N-linked (GlcNAc...) asparagine). The Ca(2+) site is built by Glu430 and Glu435. The tract at residues 430–449 (EGSPEERKAMEKASGKRPDD) is disordered. 2 N-linked (GlcNAc...) asparagine glycosylation sites follow: Asn472 and Asn488.

This sequence belongs to the transglutaminase superfamily. Transglutaminase family. As to quaternary structure, homodimer. Ca(2+) is required as a cofactor. In terms of processing, the N-terminus is blocked. Post-translationally, probably linked to the cell membrane via a lipid-anchor, possibly a GPI-anchor. N-glycosylated on 2 Asn residues by a high mannose oligosaccharide consisting of five mannose residues and a fucosylated biantennary complex glycan. As to expression, expressed in the coagulating gland, the dorsal part of the prostate and in semen (at protein level). Expressed at low levels in the lateral prostate and seminal vesicle. Not expressed in the epididymis, kidney, liver, serum, sperm plug, testes and ventral prostate.

It is found in the secreted. The protein localises to the cell membrane. The enzyme catalyses L-glutaminyl-[protein] + L-lysyl-[protein] = [protein]-L-lysyl-N(6)-5-L-glutamyl-[protein] + NH4(+). Associated with the mammalian reproductive process. Plays an important role in the formation of the seminal coagulum through the cross-linking of specific proteins present in the seminal plasma. Transglutaminase is also required to stabilize the copulatory plug. This is Protein-glutamine gamma-glutamyltransferase 4 (Tgm4) from Rattus norvegicus (Rat).